A 30-amino-acid polypeptide reads, in one-letter code: YRRRRRRGRRGRRRRGRRRRSRGRRRAHGG.

Positions 1 to 30 (YRRRRRRGRRGRRRRGRRRRSRGRRRAHGG) are disordered.

As to expression, testis.

Its subcellular location is the nucleus. The protein resides in the chromosome. Protamines substitute for histones in the chromatin of sperm during the haploid phase of spermatogenesis. They compact sperm DNA into a highly condensed, stable and inactive complex. The chain is Sperm protamine P5 from Octopus vulgaris (Common octopus).